Here is a 474-residue protein sequence, read N- to C-terminus: MTGRVGNPKDHAVVIGASIAGLCAARVLSDFYSTVTVFERDELPEAPANRATVPQDRHLHMLMARGAQEFDSLFPGLLHDMVAAGVPMLENRPDCIYLGAAGHVLGTGHTLRKEFTAYVPSRPHLEWQLRRRVLQLSNVQIVRRLVTEPQFERRQQRVVGVLLDSPGSGQDREREEFIAADLVVDAAGRGTRLPVWLTQWGYRRPAEDTVDIGISYASHQFRIPDGLIAEKVVVAGASHDQSLGLGMLCYEDGTWVLTTFGVADAKPPPTFDEMRALADKLLPARFTAALAQAQPIGCPAFHAFPASRWRRYDKLERFPRGIVPFGDAVASFNPTFGQGMTMTSLQAGHLRRALKARNSAMKGDLAAELNRATAKTTYPVWMMNAIGDISFHHATAEPLPRWWRPAGSLFDQFLGAAETDPVLAEWFLRRFSLLDSLYMVPSVPIIGRAIAHNLRLWLKEQRERRQPVTTRRSP.

Positions 1–4 (MTGR) are excised as a propeptide.

This Mycobacterium tuberculosis (strain ATCC 25618 / H37Rv) protein is Protein Rv3254.